Here is a 282-residue protein sequence, read N- to C-terminus: 4-diphosphocytidyl-2-C-methyl-D-erythritol kinase (282 aa).

Residue lysine 12 is part of the active site. ATP is bound at residue 95-105 (PMGGGIGGGSS). Aspartate 137 is a catalytic residue.

Belongs to the GHMP kinase family. IspE subfamily.

It catalyses the reaction 4-CDP-2-C-methyl-D-erythritol + ATP = 4-CDP-2-C-methyl-D-erythritol 2-phosphate + ADP + H(+). The protein operates within isoprenoid biosynthesis; isopentenyl diphosphate biosynthesis via DXP pathway; isopentenyl diphosphate from 1-deoxy-D-xylulose 5-phosphate: step 3/6. In terms of biological role, catalyzes the phosphorylation of the position 2 hydroxy group of 4-diphosphocytidyl-2C-methyl-D-erythritol. The polypeptide is 4-diphosphocytidyl-2-C-methyl-D-erythritol kinase (Pseudomonas aeruginosa (strain LESB58)).